Reading from the N-terminus, the 511-residue chain is Immunoglobulin-binding protein EibD (511 aa).

The signal sequence occupies residues 1-26; the sequence is MSKKFTMTLLSSSLAGLLVMSGGVSA. Residues 27-417 form a surface exposed passenger domain region; that stretch reads QNGTYSVLQD…SKAIAANTRT (391 aa). Over 27 to 460 the chain is Extracellular; the sequence is QNGTYSVLQD…GLFQPYSVGK (434 aa). The tract at residues 161-287 is head domain; it reads DAKASGEFSV…TGTESDKTYG (127 aa). Positions 288–303 are neck; that stretch reads TRVLGGLSDGTRNSDA. Residues 304-349 are right-handed coiled-coil (RHcc); it reads ATVGQLNRKVGGVYDDVKARITVESEKQKKYTDQKTSEVNEKVEAR. Residues 304 to 349 are a coiled coil; sequence ATVGQLNRKVGGVYDDVKARITVESEKQKKYTDQKTSEVNEKVEAR. The segment at 329 to 344 is required to bind IgA; the sequence is EKQKKYTDQKTSEVNE. The interval 350 to 375 is saddle domain; it reads TTVGVDSDGKLTRAEGATKTIAVNDG. Residues 376–441 adopt a coiled-coil conformation; it reads LVALSGRTDR…INENHKEMKR (66 aa). The left-handed coiled-coil (LHcc) stretch occupies residues 376–441; that stretch reads LVALSGRTDR…INENHKEMKR (66 aa). Positions 384–418 are required to bind IgG; that stretch reads DRIDYAVGAIDGRVTRNTQSIEKNSKAIAANTRTL. Positions 418 to 460 are outer membrane translocation of the passenger domain; that stretch reads LQQHSARLDSQQRQINENHKEMKRAAAQSAALTGLFQPYSVGK. The next 4 membrane-spanning stretches (beta stranded) occupy residues 461 to 471, 474 to 485, 488 to 497, and 501 to 511; these read FNATAAVGGYS, QALAVGVGYRFN, TAAKAGVAFS, and ASWNVGVNFEF. Residues 461-511 are translocator domain; sequence FNATAAVGGYSDQQALAVGVGYRFNEQTAAKAGVAFSDGDASWNVGVNFEF.

The protein belongs to the autotransporter-2 (AT-2) (TC 1.B.40) family. Eib subfamily. As to quaternary structure, homotrimer; can probably form mixed heterotrimers in vivo. Will form mixed heterotrimers with EibA or EibC; these are correctly located in the outer membrane and bind IgG Fc, although less well than homotrimers. In denaturing gels runs as a band of about 210 kDa. Binds the Fc portion of immunoglobulins; binds more than 1 Fc per subunit, can be modeled to bind 3 Fc per trimer.

Its subcellular location is the cell surface. It is found in the cell outer membrane. In terms of biological role, binds (in a non-immune fashion) to the Fc portion of human IgA and IgG; binding occurs on the cell surface. Confers the ability to survive exposure to human serum exposure. Binds to the Fc portion of human IgG, IgA and to whole mouse antibodies also via Fc. Upon overexpression cells acquire an extra cell surface layer that forms a zipper-like contact between cells; cells autoagglutinate and form biofilm more readily, suggesting it may play a role in defense against a host. This chain is Immunoglobulin-binding protein EibD, found in Escherichia coli.